Reading from the N-terminus, the 104-residue chain is MSEIRKNDHRLMQVLLAPVISEKATLVADKNEQVVFEVAPDATKQEVKAAVELLFKVEVNSVNVLVSKGKAKRFGRFMGKRKDVKKAYVCLKPGQEINFEAEAK.

The protein belongs to the universal ribosomal protein uL23 family. In terms of assembly, part of the 50S ribosomal subunit. Contacts protein L29, and trigger factor when it is bound to the ribosome.

Its function is as follows. One of the early assembly proteins it binds 23S rRNA. One of the proteins that surrounds the polypeptide exit tunnel on the outside of the ribosome. Forms the main docking site for trigger factor binding to the ribosome. The polypeptide is Large ribosomal subunit protein uL23 (Paraburkholderia phytofirmans (strain DSM 17436 / LMG 22146 / PsJN) (Burkholderia phytofirmans)).